Reading from the N-terminus, the 652-residue chain is DNA ligase (652 aa).

NAD(+) contacts are provided by residues 29–33 (DAEYD), 78–79 (SL), and Glu107. Lys109 acts as the N6-AMP-lysine intermediate in catalysis. Residues Arg130, Glu164, Lys278, and Lys302 each coordinate NAD(+). Cys395, Cys398, Cys413, and Cys418 together coordinate Zn(2+). The region spanning 577 to 652 (DENAALSGMT…IKDEAWLESL (76 aa)) is the BRCT domain.

This sequence belongs to the NAD-dependent DNA ligase family. LigA subfamily. Requires Mg(2+) as cofactor. Mn(2+) is required as a cofactor.

It carries out the reaction NAD(+) + (deoxyribonucleotide)n-3'-hydroxyl + 5'-phospho-(deoxyribonucleotide)m = (deoxyribonucleotide)n+m + AMP + beta-nicotinamide D-nucleotide.. Its function is as follows. DNA ligase that catalyzes the formation of phosphodiester linkages between 5'-phosphoryl and 3'-hydroxyl groups in double-stranded DNA using NAD as a coenzyme and as the energy source for the reaction. It is essential for DNA replication and repair of damaged DNA. The sequence is that of DNA ligase from Streptococcus suis (strain 05ZYH33).